Reading from the N-terminus, the 143-residue chain is ATP synthase subunit b' (143 aa).

The helical transmembrane segment at 6–26 (ATLPLMALQFVLLAIILNAIF) threads the bilayer.

The protein belongs to the ATPase B chain family. F-type ATPases have 2 components, F(1) - the catalytic core - and F(0) - the membrane proton channel. F(1) has five subunits: alpha(3), beta(3), gamma(1), delta(1), epsilon(1). F(0) has four main subunits: a(1), b(1), b'(1) and c(10-14). The alpha and beta chains form an alternating ring which encloses part of the gamma chain. F(1) is attached to F(0) by a central stalk formed by the gamma and epsilon chains, while a peripheral stalk is formed by the delta, b and b' chains.

It localises to the cellular thylakoid membrane. F(1)F(0) ATP synthase produces ATP from ADP in the presence of a proton or sodium gradient. F-type ATPases consist of two structural domains, F(1) containing the extramembraneous catalytic core and F(0) containing the membrane proton channel, linked together by a central stalk and a peripheral stalk. During catalysis, ATP synthesis in the catalytic domain of F(1) is coupled via a rotary mechanism of the central stalk subunits to proton translocation. Its function is as follows. Component of the F(0) channel, it forms part of the peripheral stalk, linking F(1) to F(0). The b'-subunit is a diverged and duplicated form of b found in plants and photosynthetic bacteria. This Crocosphaera subtropica (strain ATCC 51142 / BH68) (Cyanothece sp. (strain ATCC 51142)) protein is ATP synthase subunit b'.